Here is a 382-residue protein sequence, read N- to C-terminus: MPQRQPQPAHPADGIYFGLMSGTSMDGVDGVAVRFEAGRAPVVLAEAFVGFAQSLRDALFALQQPGDNEIDRESLAANALVTRYAVCCHELQRTAGLSRDEIRAIGVHGQTVRHRPERGYTRQLNNPALLAELTQVDVIADFRSRDVAAGGHGAPLAPAFHATVFGAPGETRVVCNLGGISNITILPGAGGDVRGFDCGPANALIDAWATRHLGKPYDDGGKFAARGTVHAALLAALLDEPYFTAPPPKSTGRDLFNPAWLDAKLAAFSQVAPEDVQATLTALTAVSVAREVAQHAPGCKAVFVCGGGARNPVLLDALRHALREAGVPATVDTTAALGVPPQQVEALAFAWLAYRFTARQPGNLATVTGAAGNRVLGALYPR.

22-29 (GTSMDGVD) provides a ligand contact to ATP.

It belongs to the anhydro-N-acetylmuramic acid kinase family.

It carries out the reaction 1,6-anhydro-N-acetyl-beta-muramate + ATP + H2O = N-acetyl-D-muramate 6-phosphate + ADP + H(+). The protein operates within amino-sugar metabolism; 1,6-anhydro-N-acetylmuramate degradation. It participates in cell wall biogenesis; peptidoglycan recycling. Functionally, catalyzes the specific phosphorylation of 1,6-anhydro-N-acetylmuramic acid (anhMurNAc) with the simultaneous cleavage of the 1,6-anhydro ring, generating MurNAc-6-P. Is required for the utilization of anhMurNAc either imported from the medium or derived from its own cell wall murein, and thus plays a role in cell wall recycling. The sequence is that of Anhydro-N-acetylmuramic acid kinase from Burkholderia cenocepacia (strain ATCC BAA-245 / DSM 16553 / LMG 16656 / NCTC 13227 / J2315 / CF5610) (Burkholderia cepacia (strain J2315)).